Here is a 300-residue protein sequence, read N- to C-terminus: GTPase Era (300 aa).

The Era-type G domain maps to 6-173 (HSGFVAILGR…IESLVNTLPE (168 aa)). The tract at residues 14–21 (GRPNVGKS) is G1. 14–21 (GRPNVGKS) contacts GTP. Positions 40–44 (QTTRN) are G2. A G3 region spans residues 61–64 (DTPG). GTP contacts are provided by residues 61–65 (DTPGI) and 123–126 (NKID). A G4 region spans residues 123-126 (NKID). Positions 152 to 154 (ISA) are G5. Residues 204 to 281 (TREEVPHSVA…YLELWVKVQP (78 aa)) form the KH type-2 domain.

This sequence belongs to the TRAFAC class TrmE-Era-EngA-EngB-Septin-like GTPase superfamily. Era GTPase family. As to quaternary structure, monomer.

The protein localises to the cytoplasm. Its subcellular location is the cell membrane. Functionally, an essential GTPase that binds both GDP and GTP, with rapid nucleotide exchange. Plays a role in 16S rRNA processing and 30S ribosomal subunit biogenesis and possibly also in cell cycle regulation and energy metabolism. The protein is GTPase Era of Ligilactobacillus salivarius (strain UCC118) (Lactobacillus salivarius).